We begin with the raw amino-acid sequence, 358 residues long: MKIMISGGGTGGHIYPALALIETLKKRHPDLQVQYIGTENGLEADLVPRAGVPFKSIQIAGLKRSLSLENVKTAYWFLKAVRALKKDMAAFKPDVVIGTGGFVSGPVVYTAQQLGIPTILHEQNSIPGLTNKFLSKKADRVALSFKGSDVHFPGANVRLIGNPRGSEVLQTEVDEASVREQYRLDDRPIVLVYGGSRGAEAINRAVVEAIPSLSELPINVLYVTGKVHFDAVSKQAPSSDNVHIHPYVYDMPSLLACTSLVISRAGASTISELTALGLPSILVPSPYVTADHQTKNASALVENGAALLVKEEALTGVTLVEAIRQALEQRDEMANASRALGFPDASDALADLVEEVIQ.

Residues 10-12 (TGG), Asn-124, Ser-196, and Gln-293 each bind UDP-N-acetyl-alpha-D-glucosamine.

Belongs to the glycosyltransferase 28 family. MurG subfamily.

The protein resides in the cell membrane. It catalyses the reaction di-trans,octa-cis-undecaprenyl diphospho-N-acetyl-alpha-D-muramoyl-L-alanyl-D-glutamyl-meso-2,6-diaminopimeloyl-D-alanyl-D-alanine + UDP-N-acetyl-alpha-D-glucosamine = di-trans,octa-cis-undecaprenyl diphospho-[N-acetyl-alpha-D-glucosaminyl-(1-&gt;4)]-N-acetyl-alpha-D-muramoyl-L-alanyl-D-glutamyl-meso-2,6-diaminopimeloyl-D-alanyl-D-alanine + UDP + H(+). It participates in cell wall biogenesis; peptidoglycan biosynthesis. Cell wall formation. Catalyzes the transfer of a GlcNAc subunit on undecaprenyl-pyrophosphoryl-MurNAc-pentapeptide (lipid intermediate I) to form undecaprenyl-pyrophosphoryl-MurNAc-(pentapeptide)GlcNAc (lipid intermediate II). This Exiguobacterium sp. (strain ATCC BAA-1283 / AT1b) protein is UDP-N-acetylglucosamine--N-acetylmuramyl-(pentapeptide) pyrophosphoryl-undecaprenol N-acetylglucosamine transferase.